Consider the following 294-residue polypeptide: Probable 2-(5''-triphosphoribosyl)-3'-dephosphocoenzyme-A synthase (294 aa).

It belongs to the CitG/MdcB family.

The catalysed reaction is 3'-dephospho-CoA + ATP = 2'-(5''-triphospho-alpha-D-ribosyl)-3'-dephospho-CoA + adenine. This Streptococcus pyogenes serotype M3 (strain ATCC BAA-595 / MGAS315) protein is Probable 2-(5''-triphosphoribosyl)-3'-dephosphocoenzyme-A synthase.